The sequence spans 461 residues: ATP synthase subunit beta 2 (461 aa).

Residue 151–158 (GGAGVGKT) coordinates ATP.

The protein belongs to the ATPase alpha/beta chains family. F-type ATPases have 2 components, CF(1) - the catalytic core - and CF(0) - the membrane proton channel. CF(1) has five subunits: alpha(3), beta(3), gamma(1), delta(1), epsilon(1). CF(0) has three main subunits: a(1), b(2) and c(9-12). The alpha and beta chains form an alternating ring which encloses part of the gamma chain. CF(1) is attached to CF(0) by a central stalk formed by the gamma and epsilon chains, while a peripheral stalk is formed by the delta and b chains.

It localises to the cell inner membrane. It carries out the reaction ATP + H2O + 4 H(+)(in) = ADP + phosphate + 5 H(+)(out). In terms of biological role, produces ATP from ADP in the presence of a proton gradient across the membrane. The catalytic sites are hosted primarily by the beta subunits. The protein is ATP synthase subunit beta 2 of Pseudoalteromonas atlantica (strain T6c / ATCC BAA-1087).